A 316-amino-acid polypeptide reads, in one-letter code: Cation efflux system protein CzcD (316 aa).

The next 6 membrane-spanning stretches (helical) occupy residues 17 to 37 (LKIALALTGTFLIAEVVGGVM), 47 to 67 (AAHMLTDTVALAIALAAIAIA), 82 to 102 (FEILAAAFNALLLFGVAIYIL), 115 to 135 (IESTGMFVVAVLGLIINLISM), 152 to 172 (YLEVWSDLLGSVGVIAGAIII), and 174 to 194 (FTGWAWVDSAIAVLIGLWVLP).

This sequence belongs to the cation diffusion facilitator (CDF) transporter (TC 2.A.4) family. SLC30A subfamily.

It localises to the cell membrane. In terms of biological role, necessary for activation of the czc determinant. In Alcaligenes sp. (strain CT14), this protein is Cation efflux system protein CzcD (czcD).